The primary structure comprises 648 residues: MAGARAAAAASAGSTASSGSPPPQEPGLWELLEEFSRTQYRAKDSGGKSGSKVERIEKRCLELFGRDYCFSVIPNVNGDICGHYPRHIVFLEYESSEKEKDTFQSTVQVNKLQDLIHRSKMARCRGRFVCPVILFKGKHICRSATLAGWGELYGRSGYNYLFSGGADDTWASTEDVTEEDFVLRSGDTHLFDKVRGYDIKLLQYLSVKYICDLMVENKKVKFGMNVTSSEKVDKAQRYANFTLLSIPYPGCEFFKEYKDRDYMAEGLIFNWKQDYVDAPLNIPNFLTQSLNIDWSQYQSWDLVQQTQNYLKLLLFIMNRDDDSGLLVHCISGWDRTPLFISLLRLSLWADGLIHTSLKPAEILYLTVAYDWFLFGHMLVDRLSKGEEIFFFCFNFLKHITSEEFCLKTQRRKSLPTRDAGFTVEDICMLRHKDRGSTTSLGSDFSLVLEHSPGAVGSFSYETVELAPAGAPTQAAWRKSHSSSPQSMLWSRPQPSEERLPSHHGLTEAKSSSSSSSNHSDNFFRMGSSPLEVPKPRSVDHPLPGSSLSTDFGSWQLVSGCGSIQDRPVLHTDSSLPFSFQDELPNSCLLTALSDRETRLQEVRSAFLAAYSSTVGLRAATPSPSGAIGGLLEQFARGVGLRGTSTSTL.

Residues Met1–Gly19 show a composition bias toward low complexity. A disordered region spans residues Met1–Gly27. N6-acetyllysine is present on Lys193. N-linked (GlcNAc...) asparagine glycosylation is found at Asn225 and Asn240. Cys329 functions as the Phosphocysteine intermediate in the catalytic mechanism. A 1,2-diacyl-sn-glycero-3-phospho-(1D-myo-inositol-3,5-bisphosphate)-binding residues include Gly332, Trp333, Asp334, Arg335, and Arg381. Positions 332, 333, 334, 335, and 381 each coordinate a 1,2-diacyl-sn-glycero-3-phospho-(1D-myo-inositol-3-phosphate). A disordered region spans residues Pro471–Gly544. Over residues Pro494–Thr506 the composition is skewed to basic and acidic residues. Ser516 bears the Phosphoserine mark. N-linked (GlcNAc...) asparagine glycosylation occurs at Asn517. Ser528, Ser578, and Ser622 each carry phosphoserine. An Omega-N-methylarginine modification is found at Arg636.

It belongs to the protein-tyrosine phosphatase family. Non-receptor class myotubularin subfamily.

Its subcellular location is the cytoplasm. It catalyses the reaction a 1,2-diacyl-sn-glycero-3-phospho-(1D-myo-inositol-3,5-bisphosphate) + H2O = a 1,2-diacyl-sn-glycero-3-phospho-(1D-myo-inositol-5-phosphate) + phosphate. The catalysed reaction is a 1,2-diacyl-sn-glycero-3-phospho-(1D-myo-inositol-3-phosphate) + H2O = a 1,2-diacyl-sn-glycero-3-phospho-(1D-myo-inositol) + phosphate. Its function is as follows. Lipid phosphatase that specifically dephosphorylates the D-3 position of phosphatidylinositol 3-phosphate and phosphatidylinositol 3,5-bisphosphate, generating phosphatidylinositol and phosphatidylinositol 5-phosphate. The polypeptide is Phosphatidylinositol-3,5-bisphosphate 3-phosphatase MTMR14 (Mus musculus (Mouse)).